Reading from the N-terminus, the 261-residue chain is Small ribosomal subunit protein mS23 (261 aa).

The segment at 234–261 (NPSESWATDEKDPKKNDDIEEDVEEIKL) is disordered. Residues 241-250 (TDEKDPKKND) are compositionally biased toward basic and acidic residues. Residues 251–261 (DIEEDVEEIKL) show a composition bias toward acidic residues.

Belongs to the mitochondrion-specific ribosomal protein mS23 family. In terms of assembly, component of the mitochondrial small ribosomal subunit.

It localises to the mitochondrion. The chain is Small ribosomal subunit protein mS23 (RSM25) from Vanderwaltozyma polyspora (strain ATCC 22028 / DSM 70294 / BCRC 21397 / CBS 2163 / NBRC 10782 / NRRL Y-8283 / UCD 57-17) (Kluyveromyces polysporus).